Reading from the N-terminus, the 142-residue chain is Large ribosomal subunit protein uL13 (142 aa).

It belongs to the universal ribosomal protein uL13 family. Part of the 50S ribosomal subunit.

Its function is as follows. This protein is one of the early assembly proteins of the 50S ribosomal subunit, although it is not seen to bind rRNA by itself. It is important during the early stages of 50S assembly. This chain is Large ribosomal subunit protein uL13, found in Dechloromonas aromatica (strain RCB).